The following is a 169-amino-acid chain: Putative phosphoesterase SERP0604 (169 aa).

His-34 serves as the catalytic Proton donor. 2 short sequence motifs (HXTX) span residues 34 to 37 and 115 to 118; these read HITI and HFTI. His-115 (proton acceptor) is an active-site residue.

This sequence belongs to the 2H phosphoesterase superfamily. YjcG family.

This chain is Putative phosphoesterase SERP0604, found in Staphylococcus epidermidis (strain ATCC 35984 / DSM 28319 / BCRC 17069 / CCUG 31568 / BM 3577 / RP62A).